The sequence spans 461 residues: Trimethylamine monooxygenase (461 aa).

FAD-binding residues include Ser-14, Glu-39, Lys-40, Gln-41, Met-47, Trp-48, and His-64. 2 residues coordinate NADP(+): Trp-72 and Asn-74. FAD contacts are provided by Asn-74 and Ala-127. Residues Ser-206, Ser-207, Ser-209, Arg-230, and Thr-231 each contribute to the NADP(+) site. The FAD site is built by Gln-319 and Thr-322. Residue Arg-413 coordinates NADP(+).

This sequence belongs to the FMO family. FAD serves as cofactor.

The enzyme catalyses trimethylamine + NADPH + O2 = trimethylamine N-oxide + NADP(+) + H2O. Its function is as follows. Catalyzes the oxidation of trimethylamine (TMA) to produce trimethylamine N-oxide (TMAO). The produced TMAO is accumulated in the cell, functioning as a piezolyte, improving both growth and survival at high hydrostatic pressure (HHP). This is Trimethylamine monooxygenase from Myroides profundi.